The sequence spans 251 residues: Flap endonuclease Xni (251 aa).

Mg(2+) is bound at residue Asp104. The 90-residue stretch at Val160–Leu249 folds into the 5'-3' exonuclease domain. Residues Leu171, Ala172, Pro180, Val182, and Ile185 each contribute to the K(+) site. An interaction with DNA region spans residues Gly184–Ser189.

This sequence belongs to the Xni family. Mg(2+) is required as a cofactor. The cofactor is K(+).

Has flap endonuclease activity. During DNA replication, flap endonucleases cleave the 5'-overhanging flap structure that is generated by displacement synthesis when DNA polymerase encounters the 5'-end of a downstream Okazaki fragment. The chain is Flap endonuclease Xni from Citrobacter koseri (strain ATCC BAA-895 / CDC 4225-83 / SGSC4696).